Reading from the N-terminus, the 1036-residue chain is Zinc finger protein 532 (1036 aa).

Disordered regions lie at residues 26–92 (PKAA…LHNG), 106–206 (GAKS…EAES), 220–265 (RKAE…PSSK), and 281–362 (AASD…KVRI). The span at 32-52 (SGHDDHESHIKQNAHVDDDSH) shows a compositional bias: basic and acidic residues. Phosphoserine occurs at positions 130, 133, and 134. The segment covering 136–151 (EEFEDDEKIEVDDPPD) has biased composition (acidic residues). Lys-175 carries the N6-acetyllysine modification. A compositionally biased stretch (polar residues) spans 182–193 (ENSSKTGVSTSG). Composition is skewed to basic and acidic residues over residues 194 to 205 (HTDKNKVKREAE) and 220 to 249 (RKAE…EKSD). Low complexity predominate over residues 253 to 265 (AAAASSKTKPSSK). The span at 302–314 (EVNDSPKAADKSP) shows a compositional bias: basic and acidic residues. A phosphoserine mark is found at Ser-306 and Ser-313. Positions 336–353 (SVSSENSSKGSPSSPVGS) are enriched in low complexity. Ser-433 is subject to Phosphoserine. Glycyl lysine isopeptide (Lys-Gly) (interchain with G-Cter in SUMO2) cross-links involve residues Lys-458 and Lys-515. The C2H2-type 1; degenerate zinc finger occupies 615 to 634 (YKCLECGDAFALEKSLSQHY). A C2H2-type 2; degenerate zinc finger spans residues 751-775 (LKCLECNEVFQDEPSLATHFQHAAD). The C2H2-type 3 zinc finger occupies 784–807 (HPCRQCDKSFSSSHSLCRHNRIKH). The C2H2-type 4; degenerate zinc-finger motif lies at 814 to 840 (YACSHCPDSRRTFTKRLMLERHIQLMH). A disordered region spans residues 847–877 (VKELSDDAGDVTNDEEEEAEIKEDAKVPSPK). Residues 852–867 (DDAGDVTNDEEEEAEI) are compositionally biased toward acidic residues. The segment covering 868–877 (KEDAKVPSPK) has biased composition (basic and acidic residues). Ser-875 carries the post-translational modification Phosphoserine. Glycyl lysine isopeptide (Lys-Gly) (interchain with G-Cter in SUMO2) cross-links involve residues Lys-879 and Lys-902. 2 consecutive C2H2-type zinc fingers follow at residues 938 to 961 (HQCR…FIVH) and 999 to 1021 (RKCK…MRTH). A disordered region spans residues 966 to 1000 (PQPVSKQNGAGEDSQQENKPSPEDEAAEGAASDRK).

It belongs to the krueppel C2H2-type zinc-finger protein family.

It localises to the nucleus. In terms of biological role, may be involved in transcriptional regulation. This chain is Zinc finger protein 532 (Znf532), found in Mus musculus (Mouse).